Here is a 101-residue protein sequence, read N- to C-terminus: Small ribosomal subunit protein uS14 (101 aa).

This sequence belongs to the universal ribosomal protein uS14 family. Part of the 30S ribosomal subunit. Contacts proteins S3 and S10.

In terms of biological role, binds 16S rRNA, required for the assembly of 30S particles and may also be responsible for determining the conformation of the 16S rRNA at the A site. The chain is Small ribosomal subunit protein uS14 from Sphingopyxis alaskensis (strain DSM 13593 / LMG 18877 / RB2256) (Sphingomonas alaskensis).